The chain runs to 89 residues: Putative regulatory protein CLH_1161 (89 aa).

This sequence belongs to the RemA family.

The chain is Putative regulatory protein CLH_1161 from Clostridium botulinum (strain Alaska E43 / Type E3).